The primary structure comprises 409 residues: SPI-1 type 3 secretion system translocon protein SctB (409 aa).

Residues 119-140 (ISGMSSSAVALLAAANTLMLTL) form a helical membrane-spanning segment. A compositionally biased stretch (polar residues) spans 350 to 368 (ERSEQQISQVNNRVASTAS). The tract at residues 350–378 (ERSEQQISQVNNRVASTASDEARESSRKS) is disordered.

This sequence belongs to the SctB/SipC family. In terms of assembly, the core secretion machinery of the T3SS is composed of approximately 20 different proteins, including cytoplasmic components, a base, an export apparatus and a needle. This subunit is involved in the formation of a pore, called the translocon, in host membrane.

The protein resides in the secreted. It is found in the host membrane. In terms of biological role, component of the type III secretion system 1 (SPI-1 T3SS), also called injectisome, which is used to inject bacterial effector proteins into eukaryotic host cells. SipB/SctE1 and SipC/SctB1 are inserted into the host membrane where they form a pore and allow the translocation of effector proteins into the cytosol of target cells. In Salmonella typhi, this protein is SPI-1 type 3 secretion system translocon protein SctB.